The sequence spans 162 residues: Cyclic pyranopterin monophosphate synthase (162 aa).

Residues leucine 75 to histidine 77 and methionine 113 to glutamate 114 each bind substrate. The active site involves aspartate 128.

This sequence belongs to the MoaC family. Homohexamer; trimer of dimers.

It carries out the reaction (8S)-3',8-cyclo-7,8-dihydroguanosine 5'-triphosphate = cyclic pyranopterin phosphate + diphosphate. Its pathway is cofactor biosynthesis; molybdopterin biosynthesis. In terms of biological role, catalyzes the conversion of (8S)-3',8-cyclo-7,8-dihydroguanosine 5'-triphosphate to cyclic pyranopterin monophosphate (cPMP). The protein is Cyclic pyranopterin monophosphate synthase of Burkholderia lata (strain ATCC 17760 / DSM 23089 / LMG 22485 / NCIMB 9086 / R18194 / 383).